The sequence spans 284 residues: Phosphatidylglycerol--prolipoprotein diacylglyceryl transferase (284 aa).

The next 7 helical transmembrane spans lie at 21-41, 62-82, 106-126, 136-156, 190-210, 218-238, and 252-272; these read IEVH…FYMA, YFLW…ILIY, FVGI…IASY, LLIY…FGRI, PSQL…VMWA, GLLI…AEFY, and LSMG…ILLY. Arg155 lines the a 1,2-diacyl-sn-glycero-3-phospho-(1'-sn-glycerol) pocket.

The protein belongs to the Lgt family.

It localises to the cell inner membrane. The catalysed reaction is L-cysteinyl-[prolipoprotein] + a 1,2-diacyl-sn-glycero-3-phospho-(1'-sn-glycerol) = an S-1,2-diacyl-sn-glyceryl-L-cysteinyl-[prolipoprotein] + sn-glycerol 1-phosphate + H(+). It participates in protein modification; lipoprotein biosynthesis (diacylglyceryl transfer). Catalyzes the transfer of the diacylglyceryl group from phosphatidylglycerol to the sulfhydryl group of the N-terminal cysteine of a prolipoprotein, the first step in the formation of mature lipoproteins. The polypeptide is Phosphatidylglycerol--prolipoprotein diacylglyceryl transferase (Helicobacter pylori (strain P12)).